The sequence spans 139 residues: Transcription antitermination protein NusB (139 aa).

Belongs to the NusB family.

Functionally, involved in transcription antitermination. Required for transcription of ribosomal RNA (rRNA) genes. Binds specifically to the boxA antiterminator sequence of the ribosomal RNA (rrn) operons. The sequence is that of Transcription antitermination protein NusB from Salmonella agona (strain SL483).